A 338-amino-acid chain; its full sequence is CRISPR system Cmr subunit Cmr1-1 (338 aa).

It belongs to the CRISPR system Cmr1 family. In terms of assembly, part of the type III-B Cmr ribonucleoprotein (RNP) complex, an elongated RNP with Cmr2 and Cmr3 as the base, with Cmr4 and Cmr5 forming a helical core along the mature crRNA (39 or 45 nt in length), while the complex is capped by Cmr6 and Cmr1. The 5' end of the crRNA is bound to Cmr2 and Cmr3, while Cmr6 and a Cmr1 subunit (Cmr1-1 or Cmr1-2) cap the 3' end of the crRNA. The target RNA lies antiparallel to the crRNA, with its 5' end near Cmr1 and Cmr6 and its 3' end near Cmr2 and Cmr3; major target cleavage occurs nears the junction of Cmr1/Cmr6 and Cmr4/Cmr, with minor cleavage occurring at 6 nt intervals which coincide with the proposed spacing of Cmr4 subunits.

It is found in the cytoplasm. In terms of biological role, CRISPR (clustered regularly interspaced short palindromic repeat), is an adaptive immune system that provides protection against mobile genetic elements (viruses, transposable elements and conjugative plasmids). CRISPR clusters contain sequences complementary to antecedent mobile elements and target invading nucleic acids. CRISPR clusters are transcribed and processed into CRISPR RNA (crRNA), formerly called psiRNA (prokaryotic silencing) in this organism. Part of the Cmr ribonucleoprotein complex which has divalent cation-dependent endoribonuclease activity specific for ssRNA complementary to the crRNA (target RNA), generating 5' hydroxy- and 3' phosphate or 2'-3' cyclic phosphate termini. Cmr4 is probably the subunit that cleaves target RNA. Cmr complex does not cleave ssDNA complementary to the crRNA. Cleavage of invading RNA is guided by the crRNA; substrate cleavage occurs a fixed distance (14 nt) from the 3' end of the crRNA. In vitro reconstitution shows Cmr1-2 and Cmr5 are not absolutely necessary for target cleavage. This chain is CRISPR system Cmr subunit Cmr1-1, found in Pyrococcus furiosus (strain ATCC 43587 / DSM 3638 / JCM 8422 / Vc1).